A 308-amino-acid polypeptide reads, in one-letter code: Isoaspartyl peptidase/L-asparaginase (308 aa).

Position 1 is an N-acetylmethionine (M1). T168 functions as the Nucleophile in the catalytic mechanism. Residues 196 to 199 (RVGD) and 219 to 222 (TGHG) each bind substrate.

It belongs to the Ntn-hydrolase family. In terms of assembly, heterodimer of an alpha and beta chain produced by autocleavage. This heterodimer may then dimerize in turn, giving rise to a heterotetramer. Cleaved into an alpha and beta chain by autocatalysis; this activates the enzyme. The N-terminal residue of the beta subunit is responsible for the nucleophile hydrolase activity.

Its subcellular location is the cytoplasm. It carries out the reaction L-asparagine + H2O = L-aspartate + NH4(+). The catalysed reaction is Cleavage of a beta-linked Asp residue from the N-terminus of a polypeptide.. Its function is as follows. Has both L-asparaginase and beta-aspartyl peptidase activity. May be involved in the production of L-aspartate, which can act as an excitatory neurotransmitter in some brain regions. Is highly active with L-Asp beta-methyl ester. Besides, has catalytic activity toward beta-aspartyl dipeptides and their methyl esters, including beta-L-Asp-L-Phe, beta-L-Asp-L-Phe methyl ester (aspartame), beta-L-Asp-L-Ala, beta-L-Asp-L-Leu and beta-L-Asp-L-Lys. Does not have aspartylglucosaminidase activity and is inactive toward GlcNAc-L-Asn. Likewise, has no activity toward glutamine. This chain is Isoaspartyl peptidase/L-asparaginase (ASRGL1), found in Bos taurus (Bovine).